We begin with the raw amino-acid sequence, 607 residues long: Siderochrome iron transporter 2 (607 aa).

Residues 1-46 (MGLFGSFGARNKATPQVPPGAVAKAPEGTPKGPETNDQPDMDSSRL) form a disordered region. Helical transmembrane passes span 86–106 (VWATYAWIWVCFFLLALQSGI), 129–149 (ILSSIIGGVLKLPIAKILNLW), 152–172 (AEGFLVFVGVYTIGLIILAAC), 180–200 (AGYVLFWIGYDAIYLILDVFV), 210–230 (AFTFAFASTPFICTAFTAPLA), 242–262 (WAYGAFAIIMPVALAPLAVVF), 297–317 (IIGAFLLMAAWVLLLLPFSLA), 326–346 (SAAFIAMVIIGFCLFFAFAAW), 367–387 (LGACVMAATLYFSFYCWDLYF), 404–424 (YMTQIYNVGSCFWGVVFGLWV), 432–452 (HTCLFFGLPLMILGAGLMIHF), 459–479 (IGYVIMCQIFIAFGGGTLVIG), and 499–519 (FIGLFSSLGGAIGYAVAAAIY). The N-linked (GlcNAc...) asparagine glycan is linked to Asn-538. A helical membrane pass occupies residues 573–593 (FGAVAATCILILGIPAIAVWK).

The protein belongs to the major facilitator superfamily.

It is found in the cell membrane. In terms of biological role, major facilitator transporter involved in ferrichrome (FC) uptake. In Aspergillus fumigatus (strain ATCC MYA-4609 / CBS 101355 / FGSC A1100 / Af293) (Neosartorya fumigata), this protein is Siderochrome iron transporter 2.